An 836-amino-acid polypeptide reads, in one-letter code: MSRFFVSGYDSESSSEEEDLLTSSEEELMSSEQESDSEFDDEFANDDDSDSSDSDSDGRPSGPAYFLKSSFRKGAGGDSDSDSEDEGRRVVKSAKEKLTDDMKDAVEAVNSAKRQENWISALTEFERLGRLLVRAGQQGFGTPNFYIKCLVDLEAYLIETTANEKESTRKMNANLARAFTSLKQRVKKQVKEFSHLVELYKSEPELFDKEEPVETIEKDAEIQATPLASSTGRALSPVFATLKSVAETRGKKNIDKFEQVQILEDLLEEVSPKGSPFEIISIYQMLLSIRFDASSHHAFMPLDQWQKNKDTLNDLLDFLEKHSNEYQVSELGTASDDIDLEPPANADGIRILPGSVTSHIERLDDEFIRYLQNTDPHSLEYIDRLKDEKDTYNLVVRGQLYVEKTTPDHVRGTYQGEQLARIVMRRMNHIYYKPDQLIKANESEAWRHLSGDSQIVAKNSEPKDVINGLAEFLSKQDGAIYPKGALLFSVYYHAVNNDYSVARDMFLSSQVHQGINNADSSIQVLYNRAMVQLGLSAFRYGNIEESHQALNEIANSQRLKELLGQGFNSKYPSQATVAEKQRLLPFHMHINLELLECVFMTCSLLIEIPQLAAASNSTKESRRKTNIKSFKSKLEFHDRQYFTGPPESIKDHIVHASISLQKGDWHNAYKLLSTIKIWKLLPNNDQLLEMMRGKLQVEGLRTYIFTYKSIYTKLSVVKLAKIFDINEEEVLSIVDKMISSGEVSASLSDDKKSINFVSSEHLQRTRLQELAIVMNEKIGLLTDKNEKTASNGHGRKTTQQQQQQQQKEQREQTHDENIKFRYANVNTNNDEFQTIA.

Residues 1-97 (MSRFFVSGYD…RRVVKSAKEK (97 aa)) form a disordered region. Acidic residues predominate over residues 13–55 (SSSEEEDLLTSSEEELMSSEQESDSEFDDEFANDDDSDSSDSD). Positions 86–97 (EGRRVVKSAKEK) are enriched in basic and acidic residues. Positions 586-761 (FHMHINLELL…KSINFVSSEH (176 aa)) constitute a PCI domain. The segment at 783-817 (DKNEKTASNGHGRKTTQQQQQQQQKEQREQTHDEN) is disordered. Low complexity predominate over residues 797–806 (TTQQQQQQQQ). The span at 807–817 (KEQREQTHDEN) shows a compositional bias: basic and acidic residues.

The protein belongs to the eIF-3 subunit C family. In terms of assembly, component of the eukaryotic translation initiation factor 3 (eIF-3) complex.

The protein resides in the cytoplasm. Its function is as follows. Component of the eukaryotic translation initiation factor 3 (eIF-3) complex, which is involved in protein synthesis of a specialized repertoire of mRNAs and, together with other initiation factors, stimulates binding of mRNA and methionyl-tRNAi to the 40S ribosome. The eIF-3 complex specifically targets and initiates translation of a subset of mRNAs involved in cell proliferation. The polypeptide is Eukaryotic translation initiation factor 3 subunit C (Meyerozyma guilliermondii (strain ATCC 6260 / CBS 566 / DSM 6381 / JCM 1539 / NBRC 10279 / NRRL Y-324) (Yeast)).